The sequence spans 257 residues: Acetylglutamate kinase (257 aa).

Residues 43–44 (GG), Arg-65, and Asn-157 contribute to the substrate site. ATP is bound by residues 180–185 (DISSIL) and 208–210 (IIT).

The protein belongs to the acetylglutamate kinase family. ArgB subfamily. As to quaternary structure, homodimer.

It is found in the cytoplasm. The catalysed reaction is N-acetyl-L-glutamate + ATP = N-acetyl-L-glutamyl 5-phosphate + ADP. Its pathway is amino-acid biosynthesis; L-arginine biosynthesis; N(2)-acetyl-L-ornithine from L-glutamate: step 2/4. Its function is as follows. Catalyzes the ATP-dependent phosphorylation of N-acetyl-L-glutamate. The sequence is that of Acetylglutamate kinase from Buchnera aphidicola subsp. Acyrthosiphon pisum (strain 5A).